Consider the following 614-residue polypeptide: Chaperone protein DnaK (614 aa).

Thr176 is modified (phosphothreonine; by autocatalysis). Positions 576–614 are disordered; the sequence is YQQQQSQGGEAGAANGDASKKDDNTVDGDFHEVHDDDKK. Low complexity predominate over residues 577 to 589; that stretch reads QQQQSQGGEAGAA. Residues 593-614 are compositionally biased toward basic and acidic residues; that stretch reads ASKKDDNTVDGDFHEVHDDDKK.

The protein belongs to the heat shock protein 70 family.

Acts as a chaperone. The polypeptide is Chaperone protein DnaK (Fructilactobacillus sanfranciscensis (Lactobacillus sanfranciscensis)).